We begin with the raw amino-acid sequence, 232 residues long: Two-component response regulator ORR4 (232 aa).

In terms of domain architecture, Response regulatory spans 11-147 (HVLAVDDSLI…DMKKLKSHLL (137 aa)). The residue at position 80 (Asp-80) is a 4-aspartylphosphate. Disordered regions lie at residues 153-174 (LPMA…AASA) and 202-232 (AAAM…AVET). A compositionally biased stretch (polar residues) spans 209-232 (VISSPDQRTKPRLSSTSSGLAVET).

Belongs to the ARR family. Type-A subfamily. Two-component system major event consists of a His-to-Asp phosphorelay between a sensor histidine kinase (HK) and a response regulator (RR). In plants, the His-to-Asp phosphorelay involves an additional intermediate named Histidine-containing phosphotransfer protein (HPt). This multistep phosphorelay consists of a His-Asp-His-Asp sequential transfer of a phosphate group between first a His and an Asp of the HK protein, followed by the transfer to a conserved His of the HPt protein and finally the transfer to an Asp in the receiver domain of the RR protein. Expressed in mature leaves and flowers, and at low levels in roots and shoots.

Functions as a response regulator involved in His-to-Asp phosphorelay signal transduction system. Phosphorylation of the Asp residue in the receiver domain activates the ability of the protein to promote the transcription of target genes. Type-A response regulators seem to act as negative regulators of the cytokinin signaling. In Oryza sativa subsp. indica (Rice), this protein is Two-component response regulator ORR4.